A 164-amino-acid polypeptide reads, in one-letter code: 3-isopropylmalate dehydratase small subunit 2 (164 aa).

This sequence belongs to the LeuD family. LeuD type 2 subfamily. In terms of assembly, heterodimer of LeuC and LeuD.

The catalysed reaction is (2R,3S)-3-isopropylmalate = (2S)-2-isopropylmalate. It functions in the pathway amino-acid biosynthesis; L-leucine biosynthesis; L-leucine from 3-methyl-2-oxobutanoate: step 2/4. Its function is as follows. Catalyzes the isomerization between 2-isopropylmalate and 3-isopropylmalate, via the formation of 2-isopropylmaleate. This is 3-isopropylmalate dehydratase small subunit 2 (leuD2) from Pyrococcus furiosus (strain ATCC 43587 / DSM 3638 / JCM 8422 / Vc1).